The chain runs to 316 residues: 4-hydroxy-3-methylbut-2-enyl diphosphate reductase (316 aa).

C12 contacts [4Fe-4S] cluster. Residues H43 and H81 each contribute to the (2E)-4-hydroxy-3-methylbut-2-enyl diphosphate site. Residues H43 and H81 each contribute to the dimethylallyl diphosphate site. Residues H43 and H81 each contribute to the isopentenyl diphosphate site. C103 is a binding site for [4Fe-4S] cluster. Residue H131 participates in (2E)-4-hydroxy-3-methylbut-2-enyl diphosphate binding. H131 contributes to the dimethylallyl diphosphate binding site. Isopentenyl diphosphate is bound at residue H131. E133 serves as the catalytic Proton donor. (2E)-4-hydroxy-3-methylbut-2-enyl diphosphate is bound at residue T170. Residue C198 participates in [4Fe-4S] cluster binding. 3 residues coordinate (2E)-4-hydroxy-3-methylbut-2-enyl diphosphate: S226, N228, and S271. Residues S226, N228, and S271 each contribute to the dimethylallyl diphosphate site. Isopentenyl diphosphate is bound by residues S226, N228, and S271.

The protein belongs to the IspH family. [4Fe-4S] cluster serves as cofactor.

It catalyses the reaction isopentenyl diphosphate + 2 oxidized [2Fe-2S]-[ferredoxin] + H2O = (2E)-4-hydroxy-3-methylbut-2-enyl diphosphate + 2 reduced [2Fe-2S]-[ferredoxin] + 2 H(+). The enzyme catalyses dimethylallyl diphosphate + 2 oxidized [2Fe-2S]-[ferredoxin] + H2O = (2E)-4-hydroxy-3-methylbut-2-enyl diphosphate + 2 reduced [2Fe-2S]-[ferredoxin] + 2 H(+). It functions in the pathway isoprenoid biosynthesis; dimethylallyl diphosphate biosynthesis; dimethylallyl diphosphate from (2E)-4-hydroxy-3-methylbutenyl diphosphate: step 1/1. The protein operates within isoprenoid biosynthesis; isopentenyl diphosphate biosynthesis via DXP pathway; isopentenyl diphosphate from 1-deoxy-D-xylulose 5-phosphate: step 6/6. Functionally, catalyzes the conversion of 1-hydroxy-2-methyl-2-(E)-butenyl 4-diphosphate (HMBPP) into a mixture of isopentenyl diphosphate (IPP) and dimethylallyl diphosphate (DMAPP). Acts in the terminal step of the DOXP/MEP pathway for isoprenoid precursor biosynthesis. The polypeptide is 4-hydroxy-3-methylbut-2-enyl diphosphate reductase (Bacillus anthracis (strain A0248)).